We begin with the raw amino-acid sequence, 502 residues long: Serine carboxypeptidase-like 40 (502 aa).

The N-terminal stretch at 1 to 24 (MRKGQGYSYSVIASVLVLLCVVVS) is a signal peptide. Asn103 and Asn187 each carry an N-linked (GlcNAc...) asparagine glycan. 3 disulfides stabilise this stretch: Cys136–Cys384, Cys293–Cys307, and Cys331–Cys352. Residue Ser229 is part of the active site. Asn333 and Asn373 each carry an N-linked (GlcNAc...) asparagine glycan. The active site involves Asp420. N-linked (GlcNAc...) asparagine glycosylation is present at Asn436. Residue His473 is part of the active site.

It belongs to the peptidase S10 family. As to expression, expressed in roots, leaves, flowers and siliques.

It localises to the secreted. In terms of biological role, probable carboxypeptidase. The protein is Serine carboxypeptidase-like 40 (SCPL40) of Arabidopsis thaliana (Mouse-ear cress).